The sequence spans 382 residues: Protein PEP-RELATED DEVELOPMENT ARRESTED 1 homolog, chloroplastic (382 aa).

The N-terminal 44 residues, 1–44 (MAILPLSISHSLTSALSATSSGIGRPVARLLHPRVPSRPTVICL), are a transit peptide targeting the chloroplast.

Its subcellular location is the plastid. The protein localises to the chloroplast stroma. The protein resides in the chloroplast nucleoid. In terms of biological role, plays an essential role in early steps of chloroplast development. May be involved in the redox control of plastid gene expression by maintening the redox state around chloroplast nucleoids. May positively regulate plastid-encoded RNA polymerase (PEP) activity. The polypeptide is Protein PEP-RELATED DEVELOPMENT ARRESTED 1 homolog, chloroplastic (Oryza sativa subsp. japonica (Rice)).